Here is a 375-residue protein sequence, read N- to C-terminus: Succinyl-diaminopimelate desuccinylase (375 aa).

Histidine 66 provides a ligand contact to Zn(2+). Aspartate 68 is a catalytic residue. Aspartate 99 is a binding site for Zn(2+). Residue glutamate 133 is the Proton acceptor of the active site. Glutamate 134, glutamate 162, and histidine 348 together coordinate Zn(2+).

Belongs to the peptidase M20A family. DapE subfamily. Homodimer. It depends on Zn(2+) as a cofactor. Co(2+) serves as cofactor.

It carries out the reaction N-succinyl-(2S,6S)-2,6-diaminopimelate + H2O = (2S,6S)-2,6-diaminopimelate + succinate. The protein operates within amino-acid biosynthesis; L-lysine biosynthesis via DAP pathway; LL-2,6-diaminopimelate from (S)-tetrahydrodipicolinate (succinylase route): step 3/3. In terms of biological role, catalyzes the hydrolysis of N-succinyl-L,L-diaminopimelic acid (SDAP), forming succinate and LL-2,6-diaminopimelate (DAP), an intermediate involved in the bacterial biosynthesis of lysine and meso-diaminopimelic acid, an essential component of bacterial cell walls. This chain is Succinyl-diaminopimelate desuccinylase, found in Erwinia tasmaniensis (strain DSM 17950 / CFBP 7177 / CIP 109463 / NCPPB 4357 / Et1/99).